The primary structure comprises 644 residues: MFQDNPLLAQLKQQLHSQTPRAEGVVKATEKGFGFLEVDAQKSYFIPPPQMKKVMHGDRIIAVIHSEKERESAEPEELVEPFLTRFVGKVQGKNDRLAIVPDHPLLKDAIPCRAARGLNHEFKEGDWAVAEMRRHPLKGDRSFYAELTQYITFGDDHFVPWWVTLARHNLEKEAPDGVATEMLDEGLVREDLTALDFVTIDSASTEDMDDALFAKALPDGKLQLIVAIADPTAWIAEGSKLDKAAKIRAFTNYLPGFNIPMLPRELSDDLCSLRANEVRPVLACRMTLSTDGTIEDNIEFFAATIESKAKLVYDQVSDWLENTGDWQPESEAIAEQVRLLAQICQRRGEWRHNHALVFKDRPDYRFILGEKGEVLDIVAEPRRIANRIVEEAMIAANICAARVLRDKLGFGIYNVHMGFDPANADALAALLKTHGLHVDAEEVLTLDGFCKLRRELDAQPTGFLDSRIRRFQSFAEISTEPGPHFGLGLEAYATWTSPIRKYGDMINHRLLKAVIKGETATRPQDEITVQMAERRRLNRMAERDVGDWLYARFLKDKAGTDTRFAAEIVDISRGGMRVRLVDNGAIAFIPAPFLHAVRDELVCSQENGTVQIKGETAYKVTDVIDVTIAEVRMETRSIIARPVA.

In terms of domain architecture, RNB spans 189–516 (REDLTALDFV…NHRLLKAVIK (328 aa)). In terms of domain architecture, S1 motif spans 561 to 643 (DTRFAAEIVD…ETRSIIARPV (83 aa)).

The protein belongs to the RNR ribonuclease family. RNase II subfamily.

The protein localises to the cytoplasm. It carries out the reaction Exonucleolytic cleavage in the 3'- to 5'-direction to yield nucleoside 5'-phosphates.. Functionally, involved in mRNA degradation. Hydrolyzes single-stranded polyribonucleotides processively in the 3' to 5' direction. This Escherichia coli O6:K15:H31 (strain 536 / UPEC) protein is Exoribonuclease 2.